A 420-amino-acid chain; its full sequence is Gamma-glutamyl phosphate reductase (420 aa).

Belongs to the gamma-glutamyl phosphate reductase family.

The protein localises to the cytoplasm. It carries out the reaction L-glutamate 5-semialdehyde + phosphate + NADP(+) = L-glutamyl 5-phosphate + NADPH + H(+). The protein operates within amino-acid biosynthesis; L-proline biosynthesis; L-glutamate 5-semialdehyde from L-glutamate: step 2/2. In terms of biological role, catalyzes the NADPH-dependent reduction of L-glutamate 5-phosphate into L-glutamate 5-semialdehyde and phosphate. The product spontaneously undergoes cyclization to form 1-pyrroline-5-carboxylate. In Cereibacter sphaeroides (strain KD131 / KCTC 12085) (Rhodobacter sphaeroides), this protein is Gamma-glutamyl phosphate reductase.